The primary structure comprises 100 residues: Transcription elongation factor A protein-like 7 (100 aa).

Positions 1–32 are enriched in basic and acidic residues; sequence MQKPCKENEGKPKCSVPKREEKRPYGEFERQQ. The tract at residues 1–34 is disordered; the sequence is MQKPCKENEGKPKCSVPKREEKRPYGEFERQQTE. The stretch at 60-88 forms a coiled coil; sequence EEMTREGDEMERCLEEIRGLRKKFRALHS.

This sequence belongs to the TFS-II family. TFA subfamily. Highly expressed in normal and fetal brain tissues, and weakly expressed in uterus and ovary. Down-regulated in epithelial ovarian, cervical, prostate, breast, brain and lung cancer cell lines and in brain and ovarian tumors.

It localises to the nucleus. Plays a role in the negative regulation of NF-kappa-B signaling at the basal level by modulating transcriptional activity of NF-kappa-B on its target gene promoters. Associates with cyclin D1 promoter containing Myc E-box sequence and transcriptionally represses cyclin D1 expression. Regulates telomerase reverse transcriptase expression and telomerase activity in both ALT (alternative lengthening of telomeres)and telomerase-positive cell lines. In Homo sapiens (Human), this protein is Transcription elongation factor A protein-like 7 (TCEAL7).